We begin with the raw amino-acid sequence, 157 residues long: Sorting nexin-3 (157 aa).

The tract at residues 1–21 (MSKPFQPISDVINTSPKNKSQ) is disordered. A compositionally biased stretch (polar residues) spans 11–21 (VINTSPKNKSQ). The PX domain occupies 32 to 152 (NFLEIEVKNP…EFIQNEKWDP (121 aa)). A 1,2-diacyl-sn-glycero-3-phospho-(1D-myo-inositol-3-phosphate)-binding residues include R75, S77, K101, and R117.

The protein belongs to the sorting nexin family.

The protein resides in the cytoplasm. The protein localises to the golgi apparatus membrane. It localises to the prevacuolar compartment membrane. Required for retention of late Golgi membrane proteins. Component of the retrieval machinery that functions by direct interaction with the cytosolic tails of certain TGN membrane proteins during the sorting/budding process at the prevacuolar compartment. Binds phosphatidylinositol 3-phosphate (PtdIns(P3)). The chain is Sorting nexin-3 (SNX3) from Candida albicans (strain SC5314 / ATCC MYA-2876) (Yeast).